The following is a 306-amino-acid chain: Putative transcriptional regulator (306 aa).

Positions 1–61 constitute an HTH lysR-type domain; that stretch reads MIKRNLNDLL…TRTTRSVSPT (61 aa). Residues 21-40 constitute a DNA-binding region (H-T-H motif); that stretch reads FTRAAAQLGVTQSALSQSIS.

The protein belongs to the LysR transcriptional regulatory family.

May have a role in the regulation of oprD expression. In Pseudomonas aeruginosa (strain ATCC 15692 / DSM 22644 / CIP 104116 / JCM 14847 / LMG 12228 / 1C / PRS 101 / PAO1), this protein is Putative transcriptional regulator.